Reading from the N-terminus, the 287-residue chain is Inorganic pyrophosphatase (287 aa).

Residue R79 coordinates diphosphate. Mg(2+) is bound by residues D116, D121, and D153. Residues 244–258 (NSTLGNSDSVDSSKL) show a composition bias toward polar residues. The tract at residues 244 to 269 (NSTLGNSDSVDSSKLASIPRGENLPP) is disordered.

This sequence belongs to the PPase family. Mg(2+) serves as cofactor.

The protein resides in the cytoplasm. The catalysed reaction is diphosphate + H2O = 2 phosphate + H(+). Functionally, involved in osmoadaptation. The polypeptide is Inorganic pyrophosphatase (ipp1) (Emericella nidulans (strain FGSC A4 / ATCC 38163 / CBS 112.46 / NRRL 194 / M139) (Aspergillus nidulans)).